Here is a 423-residue protein sequence, read N- to C-terminus: Phosphoribosylamine--glycine ligase (423 aa).

In terms of domain architecture, ATP-grasp spans 107–314 (KAFMAKYNIP…LSDLVEAAID (208 aa)). 133 to 194 (VNQKGAPIVI…EDFLQGEEAS (62 aa)) lines the ATP pocket. The Mg(2+) site is built by E284 and N286.

The protein belongs to the GARS family. Mg(2+) is required as a cofactor. Requires Mn(2+) as cofactor.

It catalyses the reaction 5-phospho-beta-D-ribosylamine + glycine + ATP = N(1)-(5-phospho-beta-D-ribosyl)glycinamide + ADP + phosphate + H(+). The protein operates within purine metabolism; IMP biosynthesis via de novo pathway; N(1)-(5-phospho-D-ribosyl)glycinamide from 5-phospho-alpha-D-ribose 1-diphosphate: step 2/2. This is Phosphoribosylamine--glycine ligase from Neisseria meningitidis serogroup A / serotype 4A (strain DSM 15465 / Z2491).